A 190-amino-acid polypeptide reads, in one-letter code: Xanthine phosphoribosyltransferase (190 aa).

Xanthine is bound by residues L20 and N27. 128-132 contributes to the 5-phospho-alpha-D-ribose 1-diphosphate binding site; sequence ANGQA. Residue K156 coordinates xanthine.

It belongs to the purine/pyrimidine phosphoribosyltransferase family. Xpt subfamily. As to quaternary structure, homodimer.

It localises to the cytoplasm. It catalyses the reaction XMP + diphosphate = xanthine + 5-phospho-alpha-D-ribose 1-diphosphate. Its pathway is purine metabolism; XMP biosynthesis via salvage pathway; XMP from xanthine: step 1/1. Converts the preformed base xanthine, a product of nucleic acid breakdown, to xanthosine 5'-monophosphate (XMP), so it can be reused for RNA or DNA synthesis. The polypeptide is Xanthine phosphoribosyltransferase (Pediococcus pentosaceus (strain ATCC 25745 / CCUG 21536 / LMG 10740 / 183-1w)).